The primary structure comprises 249 residues: Probable GDP-mannose transporter 2 (249 aa).

Over Met-1–Pro-15 the chain is Lumenal. The chain crosses the membrane as a helical span at residues Ile-16–Phe-36. Residues Gly-37–Ser-47 are Cytoplasmic-facing. Residues Phe-48–Ile-68 traverse the membrane as a helical segment. The Lumenal segment spans residues Lys-69–Thr-84. Residues Ile-85 to Phe-105 form a helical membrane-spanning segment. The Cytoplasmic segment spans residues Val-106 to Asp-122. The chain crosses the membrane as a helical span at residues Thr-123–Glu-143. Residues Asp-144 to Leu-159 lie on the Lumenal side of the membrane. N-linked (GlcNAc...) asparagine glycosylation is found at Asn-149 and Asn-153. A helical membrane pass occupies residues Ala-160 to Val-180. Topologically, residues Arg-181–Thr-186 are cytoplasmic. The chain crosses the membrane as a helical span at residues Thr-187 to Phe-207. Residues Asp-208–Lys-211 lie on the Lumenal side of the membrane. Residues Asn-212 to Ala-232 traverse the membrane as a helical segment. Over Lys-233–Lys-249 the chain is Cytoplasmic.

The protein belongs to the TPT transporter family. SLC35D subfamily.

It is found in the golgi apparatus membrane. The protein localises to the cytoplasmic vesicle membrane. The protein resides in the endoplasmic reticulum membrane. Its function is as follows. Involved in the import of GDP-mannose from the cytoplasm into the Golgi lumen. This Saccharomyces cerevisiae (strain RM11-1a) (Baker's yeast) protein is Probable GDP-mannose transporter 2 (HVG1).